The sequence spans 297 residues: D-aminoacyl-tRNA deacylase (297 aa).

It belongs to the DtdA deacylase family. In terms of assembly, monomer. It depends on Zn(2+) as a cofactor.

The enzyme catalyses a D-aminoacyl-tRNA + H2O = a tRNA + a D-alpha-amino acid + H(+). The catalysed reaction is glycyl-tRNA(Ala) + H2O = tRNA(Ala) + glycine + H(+). Functionally, D-aminoacyl-tRNA deacylase with broad substrate specificity. By recycling D-aminoacyl-tRNA to D-amino acids and free tRNA molecules, this enzyme counteracts the toxicity associated with the formation of D-aminoacyl-tRNA entities in vivo. This Methanosarcina mazei (strain ATCC BAA-159 / DSM 3647 / Goe1 / Go1 / JCM 11833 / OCM 88) (Methanosarcina frisia) protein is D-aminoacyl-tRNA deacylase.